Here is a 291-residue protein sequence, read N- to C-terminus: Asialoglycoprotein receptor 1 (291 aa).

Over residues methionine 1 to histidine 19 the composition is skewed to basic and acidic residues. A disordered region spans residues methionine 1–proline 27. Residues methionine 1–arginine 40 lie on the Cytoplasmic side of the membrane. An Endocytosis signal motif is present at residues cysteine 5 to leucine 8. The residue at position 16 (serine 16) is a Phosphoserine. Cysteine 36 is lipidated: S-palmitoyl cysteine. The chain crosses the membrane as a helical; Signal-anchor for type II membrane protein span at residues leucine 41–serine 61. Positions serine 61–leucine 123 form a coiled coil. The Extracellular segment spans residues glutamine 62–leucine 291. Residues asparagine 79 and asparagine 147 are each glycosylated (N-linked (GlcNAc...) asparagine). 3 cysteine pairs are disulfide-bonded: cysteine 154/cysteine 165, cysteine 182/cysteine 277, and cysteine 255/cysteine 269. Residues histidine 161–glutamate 278 form the C-type lectin domain. The Ca(2+) site is built by valine 191, glutamate 197, aspartate 216, glutamine 240, aspartate 242, aspartate 243, glutamate 253, aspartate 254, asparagine 265, aspartate 266, and glutamate 278. Serine 285 is subject to Phosphoserine.

As to quaternary structure, interacts with LASS2. Phosphorylated on a cytoplasmic Ser residue.

It is found in the membrane. In terms of biological role, mediates the endocytosis of plasma glycoproteins to which the terminal sialic acid residue on their complex carbohydrate moieties has been removed. The receptor recognizes terminal galactose and N-acetylgalactosamine units. After ligand binding to the receptor, the resulting complex is internalized and transported to a sorting organelle, where receptor and ligand are disassociated. The receptor then returns to the cell membrane surface. In Pongo abelii (Sumatran orangutan), this protein is Asialoglycoprotein receptor 1 (ASGR1).